The sequence spans 714 residues: Kinesin-like protein KIN-13 (714 aa).

The 63-residue stretch at 1–63 (MSDLVYQWLE…FRLITTLKSR (63 aa)) folds into the SAM domain. A compositionally biased stretch (polar residues) spans 69–81 (QQPSAPNTGATPQ). Disordered regions lie at residues 69-109 (QQPS…NDIQ) and 122-161 (GGYEPPYVSAQGSGPANGDDYVIPTIPYHPNAPNPPNPRG). Low complexity predominate over residues 82 to 92 (SVPSSHVSPHV). The segment covering 151-160 (PNAPNPPNPR) has biased composition (pro residues). Positions 183–515 (RIRVVIRKRP…LRYADRVKEL (333 aa)) constitute a Kinesin motor domain. 273–280 (GQTGSGKS) provides a ligand contact to ATP.

This sequence belongs to the TRAFAC class myosin-kinesin ATPase superfamily. Kinesin family. KIN-13 subfamily. Interacts with PLK. Phosphorylated by PLK.

It localises to the cytoplasm. It is found in the cytoskeleton. The protein localises to the cell projection. Its subcellular location is the cilium. The protein resides in the flagellum. It localises to the flagellum basal body. It is found in the flagellum axoneme. The protein localises to the spindle. Its subcellular location is the chromosome. The protein resides in the centromere. It localises to the kinetochore. Its function is as follows. Involved in cell cycle. Involved in formation of flagella, regulation of flagellar length, and formation of median bodies during interphase. Regulates flagellar length in all eight distal flagellar tips by promoting disassembly of the microtubules. Disassembles microtubules at the distal flagellar tips in a length-dependent manner in order to maintain different equilibrium lengths of the four flagellar pairs. Regulates interphase and mitotic microtubule dynamics. Regulates microtubule disassembly dynamics of the dual mitotic spindles and the median body. The chain is Kinesin-like protein KIN-13 from Giardia intestinalis (strain ATCC 50803 / WB clone C6) (Giardia lamblia).